A 379-amino-acid chain; its full sequence is Succinyl-diaminopimelate desuccinylase (379 aa).

Residue His68 coordinates Zn(2+). The active site involves Asp70. Asp101 contributes to the Zn(2+) binding site. Residue Glu134 is the Proton acceptor of the active site. Glu135, Glu163, and His352 together coordinate Zn(2+).

The protein belongs to the peptidase M20A family. DapE subfamily. Homodimer. Zn(2+) serves as cofactor. The cofactor is Co(2+).

It catalyses the reaction N-succinyl-(2S,6S)-2,6-diaminopimelate + H2O = (2S,6S)-2,6-diaminopimelate + succinate. It participates in amino-acid biosynthesis; L-lysine biosynthesis via DAP pathway; LL-2,6-diaminopimelate from (S)-tetrahydrodipicolinate (succinylase route): step 3/3. Catalyzes the hydrolysis of N-succinyl-L,L-diaminopimelic acid (SDAP), forming succinate and LL-2,6-diaminopimelate (DAP), an intermediate involved in the bacterial biosynthesis of lysine and meso-diaminopimelic acid, an essential component of bacterial cell walls. This Dinoroseobacter shibae (strain DSM 16493 / NCIMB 14021 / DFL 12) protein is Succinyl-diaminopimelate desuccinylase.